A 180-amino-acid chain; its full sequence is NADH-quinone oxidoreductase subunit I (180 aa).

4Fe-4S ferredoxin-type domains lie at Ile-48–Ala-80 and Glu-90–Asp-119. Positions 60, 63, 66, 70, 99, 102, 105, and 109 each coordinate [4Fe-4S] cluster.

Belongs to the complex I 23 kDa subunit family. As to quaternary structure, NDH-1 is composed of 13 different subunits. Subunits NuoA, H, J, K, L, M, N constitute the membrane sector of the complex. The cofactor is [4Fe-4S] cluster.

It localises to the cell inner membrane. It carries out the reaction a quinone + NADH + 5 H(+)(in) = a quinol + NAD(+) + 4 H(+)(out). Functionally, NDH-1 shuttles electrons from NADH, via FMN and iron-sulfur (Fe-S) centers, to quinones in the respiratory chain. The immediate electron acceptor for the enzyme in this species is believed to be ubiquinone. Couples the redox reaction to proton translocation (for every two electrons transferred, four hydrogen ions are translocated across the cytoplasmic membrane), and thus conserves the redox energy in a proton gradient. The sequence is that of NADH-quinone oxidoreductase subunit I from Cronobacter sakazakii (strain ATCC BAA-894) (Enterobacter sakazakii).